Here is a 291-residue protein sequence, read N- to C-terminus: 4-hydroxy-tetrahydrodipicolinate synthase (291 aa).

Position 45 (Thr-45) interacts with pyruvate. Residue Tyr-133 is the Proton donor/acceptor of the active site. Lys-161 functions as the Schiff-base intermediate with substrate in the catalytic mechanism. Ile-203 contributes to the pyruvate binding site.

Belongs to the DapA family. As to quaternary structure, homotetramer; dimer of dimers.

Its subcellular location is the cytoplasm. The enzyme catalyses L-aspartate 4-semialdehyde + pyruvate = (2S,4S)-4-hydroxy-2,3,4,5-tetrahydrodipicolinate + H2O + H(+). Its pathway is amino-acid biosynthesis; L-lysine biosynthesis via DAP pathway; (S)-tetrahydrodipicolinate from L-aspartate: step 3/4. Functionally, catalyzes the condensation of (S)-aspartate-beta-semialdehyde [(S)-ASA] and pyruvate to 4-hydroxy-tetrahydrodipicolinate (HTPA). The protein is 4-hydroxy-tetrahydrodipicolinate synthase of Teredinibacter turnerae (strain ATCC 39867 / T7901).